Consider the following 218-residue polypeptide: Ribose-5-phosphate isomerase A (218 aa).

Substrate-binding positions include threonine 28–threonine 31, aspartate 81–aspartate 84, and lysine 94–glycine 97. Glutamate 103 (proton acceptor) is an active-site residue. Lysine 121 serves as a coordination point for substrate.

It belongs to the ribose 5-phosphate isomerase family. Homodimer.

The enzyme catalyses aldehydo-D-ribose 5-phosphate = D-ribulose 5-phosphate. Its pathway is carbohydrate degradation; pentose phosphate pathway; D-ribose 5-phosphate from D-ribulose 5-phosphate (non-oxidative stage): step 1/1. Catalyzes the reversible conversion of ribose-5-phosphate to ribulose 5-phosphate. The polypeptide is Ribose-5-phosphate isomerase A (Buchnera aphidicola subsp. Baizongia pistaciae (strain Bp)).